The chain runs to 179 residues: Cell division protein ZapC (179 aa).

It belongs to the ZapC family. As to quaternary structure, interacts directly with FtsZ.

Its subcellular location is the cytoplasm. In terms of biological role, contributes to the efficiency of the cell division process by stabilizing the polymeric form of the cell division protein FtsZ. Acts by promoting interactions between FtsZ protofilaments and suppressing the GTPase activity of FtsZ. The sequence is that of Cell division protein ZapC from Ferrimonas balearica (strain DSM 9799 / CCM 4581 / KCTC 23876 / PAT).